The primary structure comprises 89 residues: Small ribosomal subunit protein uS15 (89 aa).

Over residues methionine 1–serine 13 the composition is skewed to basic and acidic residues. Residues methionine 1–serine 24 form a disordered region.

The protein belongs to the universal ribosomal protein uS15 family. Part of the 30S ribosomal subunit. Forms a bridge to the 50S subunit in the 70S ribosome, contacting the 23S rRNA.

Functionally, one of the primary rRNA binding proteins, it binds directly to 16S rRNA where it helps nucleate assembly of the platform of the 30S subunit by binding and bridging several RNA helices of the 16S rRNA. In terms of biological role, forms an intersubunit bridge (bridge B4) with the 23S rRNA of the 50S subunit in the ribosome. The polypeptide is Small ribosomal subunit protein uS15 (Rhodopirellula baltica (strain DSM 10527 / NCIMB 13988 / SH1)).